Reading from the N-terminus, the 309-residue chain is MSNWLDKIMPSKIRSESRQRTGVPEGLWKKCPKCGAFLYKPELEKNLDVCPKCNHHLRVSARRRLDIFLDKDGREELAAHLEPSDRLKFKDSKRYKDRLAAAQKSTGEKDALIAMRGTTMGVPLVACAFEFNFLGGSMGQVVGEKFVQAANVALEHRIPLVCFSASGGARMQEAILSLMQMAKTAAVLEKLKQEGIPYISVMTDPVFGGVSASLAMLGDLNIAEPYALIGFAGPRVIEQTVREKLPEGFQRSEFLLEHGAIDMILHRHQMRERIAHLLAKFTAQEKPGTEAPIEFEVTEKPDVDEPEGQ.

A CoA carboxyltransferase N-terminal domain is found at 27–296 (LWKKCPKCGA…PGTEAPIEFE (270 aa)). 4 residues coordinate Zn(2+): Cys-31, Cys-34, Cys-50, and Cys-53. The C4-type zinc finger occupies 31–53 (CPKCGAFLYKPELEKNLDVCPKC). The disordered stretch occupies residues 288–309 (GTEAPIEFEVTEKPDVDEPEGQ).

The protein belongs to the AccD/PCCB family. Acetyl-CoA carboxylase is a heterohexamer composed of biotin carboxyl carrier protein (AccB), biotin carboxylase (AccC) and two subunits each of ACCase subunit alpha (AccA) and ACCase subunit beta (AccD). The cofactor is Zn(2+).

It localises to the cytoplasm. It catalyses the reaction N(6)-carboxybiotinyl-L-lysyl-[protein] + acetyl-CoA = N(6)-biotinyl-L-lysyl-[protein] + malonyl-CoA. It functions in the pathway lipid metabolism; malonyl-CoA biosynthesis; malonyl-CoA from acetyl-CoA: step 1/1. Component of the acetyl coenzyme A carboxylase (ACC) complex. Biotin carboxylase (BC) catalyzes the carboxylation of biotin on its carrier protein (BCCP) and then the CO(2) group is transferred by the transcarboxylase to acetyl-CoA to form malonyl-CoA. The protein is Acetyl-coenzyme A carboxylase carboxyl transferase subunit beta of Marinobacter nauticus (strain ATCC 700491 / DSM 11845 / VT8) (Marinobacter aquaeolei).